A 234-amino-acid chain; its full sequence is Sugar fermentation stimulation protein homolog (234 aa).

The protein belongs to the SfsA family.

This chain is Sugar fermentation stimulation protein homolog, found in Edwardsiella ictaluri (strain 93-146).